The chain runs to 248 residues: Transmembrane protein 223 (248 aa).

3 consecutive transmembrane segments (helical) span residues 46–68, 84–104, and 140–160; these read IFRP…AAVA, LLAI…HFAF, and YGFT…ALLF.

Belongs to the TMEM223 family.

Its subcellular location is the mitochondrion inner membrane. Its function is as follows. Mitochondrial ribosome-associated protein involved in the first steps of cytochrome c oxidase complex (complex IV) biogenesis. Stimulates the translation of MT-CO1 mRNA and is a constituent of early MT-CO1 assembly intermediates. The polypeptide is Transmembrane protein 223 (Danio rerio (Zebrafish)).